Reading from the N-terminus, the 290-residue chain is Probable protein phosphatase 2C 20 (290 aa).

Positions 31–278 (AHGYDFVKGK…DDISCIVPCF (248 aa)) constitute a PPM-type phosphatase domain. Mn(2+)-binding residues include Asp68, Gly69, Asp230, and Asp269.

This sequence belongs to the PP2C family. Requires Mg(2+) as cofactor. Mn(2+) serves as cofactor.

The enzyme catalyses O-phospho-L-seryl-[protein] + H2O = L-seryl-[protein] + phosphate. The catalysed reaction is O-phospho-L-threonyl-[protein] + H2O = L-threonyl-[protein] + phosphate. In terms of biological role, may be involved in defense signaling. The polypeptide is Probable protein phosphatase 2C 20 (PPC3-1.2) (Arabidopsis thaliana (Mouse-ear cress)).